We begin with the raw amino-acid sequence, 719 residues long: Polyribonucleotide nucleotidyltransferase (719 aa).

Mg(2+)-binding residues include D491 and D497. One can recognise a KH domain in the interval 558-617 (PRMLTIKINPEKIRDVIGKGGATIRALTEETGTQIDISDDGTIVIASVDEAQAKEAQRRI). In terms of domain architecture, S1 motif spans 627–695 (GQVYDGSVLR…DKGRLRLSVK (69 aa)).

The protein belongs to the polyribonucleotide nucleotidyltransferase family. The cofactor is Mg(2+).

Its subcellular location is the cytoplasm. It catalyses the reaction RNA(n+1) + phosphate = RNA(n) + a ribonucleoside 5'-diphosphate. Functionally, involved in mRNA degradation. Catalyzes the phosphorolysis of single-stranded polyribonucleotides processively in the 3'- to 5'-direction. This is Polyribonucleotide nucleotidyltransferase from Bordetella petrii (strain ATCC BAA-461 / DSM 12804 / CCUG 43448).